Consider the following 282-residue polypeptide: Malonyl-[acyl-carrier protein] O-methyltransferase 1 (282 aa).

It belongs to the methyltransferase superfamily.

The catalysed reaction is malonyl-[ACP] + S-adenosyl-L-methionine = malonyl-[ACP] methyl ester + S-adenosyl-L-homocysteine. Its pathway is cofactor biosynthesis; biotin biosynthesis. Converts the free carboxyl group of a malonyl-thioester to its methyl ester by transfer of a methyl group from S-adenosyl-L-methionine (SAM). It allows to synthesize pimeloyl-ACP via the fatty acid synthetic pathway. The sequence is that of Malonyl-[acyl-carrier protein] O-methyltransferase 1 from Coxiella burnetii (strain RSA 493 / Nine Mile phase I).